Reading from the N-terminus, the 264-residue chain is Rhodanese-like domain-containing protein 4A, chloroplastic (264 aa).

Residues 1 to 60 constitute a chloroplast transit peptide; the sequence is MTSLPIILASSPLRNLTKPCSTSQIPKPIQNSTKQPPIHLLTKTNLSVTISQLIITSPVL. Residues 95–115 traverse the membrane as a helical segment; the sequence is FFVAGCTFTYLVVYPAVMFYL. A Rhodanese domain is found at 132 to 232; it reads NESDSQLLDI…ARGKNGWLAI (101 aa).

The protein resides in the plastid. It localises to the chloroplast. It is found in the membrane. The sequence is that of Rhodanese-like domain-containing protein 4A, chloroplastic (STR4A) from Arabidopsis thaliana (Mouse-ear cress).